A 385-amino-acid chain; its full sequence is Cytochrome b (385 aa).

4 helical membrane-spanning segments follow: residues 32-52, 76-98, 113-133, and 179-199; these read FGSL…TLAM, WLVR…LHIG, TWAI…LGYV, and FFAL…MHLI. 2 residues coordinate heme b: H82 and H96. Heme b-binding residues include H183 and H197. H202 lines the a ubiquinone pocket. Helical transmembrane passes span 226–246, 290–310, 322–342, and 349–369; these read FIFK…IFVF, LLGV…PITD, LSKV…QIGA, and FIEL…VIVP.

Belongs to the cytochrome b family. In terms of assembly, fungal cytochrome b-c1 complex contains 10 subunits; 3 respiratory subunits, 2 core proteins and 5 low-molecular weight proteins. Cytochrome b-c1 complex is a homodimer. Heme b is required as a cofactor.

The protein localises to the mitochondrion inner membrane. Component of the ubiquinol-cytochrome c reductase complex (complex III or cytochrome b-c1 complex) that is part of the mitochondrial respiratory chain. The b-c1 complex mediates electron transfer from ubiquinol to cytochrome c. Contributes to the generation of a proton gradient across the mitochondrial membrane that is then used for ATP synthesis. This Aspergillus tubingensis protein is Cytochrome b (cob).